We begin with the raw amino-acid sequence, 220 residues long: Lactate utilization protein C (220 aa).

The protein belongs to the LutC/YkgG family.

In terms of biological role, is involved in L-lactate degradation and allows cells to grow with lactate as the sole carbon source. The polypeptide is Lactate utilization protein C (Anoxybacillus flavithermus (strain DSM 21510 / WK1)).